The sequence spans 75 residues: U6-lycotoxin-Ls1d (75 aa).

A signal peptide spans 1–21 (MKLLFFTALVLVVISLIEVEA). Positions 22–25 (ENER) are excised as a propeptide.

This sequence belongs to the neurotoxin 19 (CSTX) family. 06 (U6-Lctx) subfamily. In terms of processing, contains 4 disulfide bonds. In terms of tissue distribution, expressed by the venom gland.

It localises to the secreted. The chain is U6-lycotoxin-Ls1d from Lycosa singoriensis (Wolf spider).